The chain runs to 243 residues: Histone H2B.2 (243 aa).

Ala2 is subject to N,N,N-trimethylalanine; alternate. Ala2 carries the post-translational modification N,N-dimethylalanine; alternate. An N-methylalanine; alternate modification is found at Ala2. Residues Pro67–Asp145 form a disordered region. Over residues Gly120–Gln132 the composition is skewed to basic and acidic residues. Residues Glu133–Lys142 show a composition bias toward basic residues.

This sequence belongs to the histone H2B family. In terms of assembly, the nucleosome is a histone octamer containing two molecules each of H2A, H2B, H3 and H4 assembled in one H3-H4 heterotetramer and two H2A-H2B heterodimers. The octamer wraps approximately 147 bp of DNA. Post-translationally, can be acetylated to form H2BK6ac.

The protein resides in the nucleus. The protein localises to the chromosome. Core component of nucleosome. Nucleosomes wrap and compact DNA into chromatin, limiting DNA accessibility to the cellular machineries which require DNA as a template. Histones thereby play a central role in transcription regulation, DNA repair, DNA replication and chromosomal stability. DNA accessibility is regulated via a complex set of post-translational modifications of histones, also called histone code, and nucleosome remodeling. The polypeptide is Histone H2B.2 (Arabidopsis thaliana (Mouse-ear cress)).